Reading from the N-terminus, the 540-residue chain is Chaperonin GroEL (540 aa).

ATP is bound by residues 29 to 32, 86 to 90, Gly413, 476 to 478, and Asp492; these read TLGP, DGTTT, and NAA.

Belongs to the chaperonin (HSP60) family. As to quaternary structure, forms a cylinder of 14 subunits composed of two heptameric rings stacked back-to-back. Interacts with the co-chaperonin GroES.

It localises to the cytoplasm. The enzyme catalyses ATP + H2O + a folded polypeptide = ADP + phosphate + an unfolded polypeptide.. In terms of biological role, together with its co-chaperonin GroES, plays an essential role in assisting protein folding. The GroEL-GroES system forms a nano-cage that allows encapsulation of the non-native substrate proteins and provides a physical environment optimized to promote and accelerate protein folding. This Streptococcus pneumoniae (strain Hungary19A-6) protein is Chaperonin GroEL.